The sequence spans 324 residues: Beta-ketoacyl-[acyl-carrier-protein] synthase III (324 aa).

Active-site residues include Cys-114 and His-246. Residues 247–251 are ACP-binding; the sequence is QANLR. Residue Asn-276 is part of the active site.

Belongs to the thiolase-like superfamily. FabH family. In terms of assembly, homodimer.

It is found in the cytoplasm. The enzyme catalyses malonyl-[ACP] + acetyl-CoA + H(+) = 3-oxobutanoyl-[ACP] + CO2 + CoA. It participates in lipid metabolism; fatty acid biosynthesis. Catalyzes the condensation reaction of fatty acid synthesis by the addition to an acyl acceptor of two carbons from malonyl-ACP. Catalyzes the first condensation reaction which initiates fatty acid synthesis and may therefore play a role in governing the total rate of fatty acid production. Possesses both acetoacetyl-ACP synthase and acetyl transacylase activities. Its substrate specificity determines the biosynthesis of branched-chain and/or straight-chain of fatty acids. This Campylobacter jejuni subsp. jejuni serotype O:6 (strain 81116 / NCTC 11828) protein is Beta-ketoacyl-[acyl-carrier-protein] synthase III.